We begin with the raw amino-acid sequence, 362 residues long: MQTPTLGQLATENGAQVVGDPDLAIIGLAPLDQAGSGELSFLSNPLYLAQALSSAAGAVIVSAADLERIRAEGQADGRNWLVARNPYVCFARIAQRFDKANQDARTGIDPRASVAADVTVPASCFIGPNVVIESGARIGERVRIVANSFVGAHAEIGDDSLLYANVSVYHHCVVGARAILHSGVVIGADGFGFAPDIGPTGVEYVKIPQTGRAVLGNDVEVGANTAIDRGAMADTVIEDGCKIDNQVQIAHNVRVGAHTVIAGCAAVSGSTHIGRFCVIGGAANFSGHLKIADRTTVSGGTSITKSITKPGGHFTSVFPFLPHGEWERNAAIVRGLTKLRERVMQLERRLRGQSAGTQTSQD.

The Proton acceptor role is filled by histidine 251.

Belongs to the transferase hexapeptide repeat family. LpxD subfamily. Homotrimer.

It catalyses the reaction a UDP-3-O-[(3R)-3-hydroxyacyl]-alpha-D-glucosamine + a (3R)-hydroxyacyl-[ACP] = a UDP-2-N,3-O-bis[(3R)-3-hydroxyacyl]-alpha-D-glucosamine + holo-[ACP] + H(+). It participates in bacterial outer membrane biogenesis; LPS lipid A biosynthesis. Its function is as follows. Catalyzes the N-acylation of UDP-3-O-acylglucosamine using 3-hydroxyacyl-ACP as the acyl donor. Is involved in the biosynthesis of lipid A, a phosphorylated glycolipid that anchors the lipopolysaccharide to the outer membrane of the cell. The sequence is that of UDP-3-O-acylglucosamine N-acyltransferase from Cupriavidus pinatubonensis (strain JMP 134 / LMG 1197) (Cupriavidus necator (strain JMP 134)).